The primary structure comprises 356 residues: tRNA N6-adenosine threonylcarbamoyltransferase (356 aa).

Fe cation-binding residues include H115 and H119. Substrate-binding positions include 138–142 (LVSGG), D171, G184, and N283. Residue D311 participates in Fe cation binding.

It belongs to the KAE1 / TsaD family. Requires Fe(2+) as cofactor.

The protein resides in the cytoplasm. It carries out the reaction L-threonylcarbamoyladenylate + adenosine(37) in tRNA = N(6)-L-threonylcarbamoyladenosine(37) in tRNA + AMP + H(+). In terms of biological role, required for the formation of a threonylcarbamoyl group on adenosine at position 37 (t(6)A37) in tRNAs that read codons beginning with adenine. Is involved in the transfer of the threonylcarbamoyl moiety of threonylcarbamoyl-AMP (TC-AMP) to the N6 group of A37, together with TsaE and TsaB. TsaD likely plays a direct catalytic role in this reaction. This chain is tRNA N6-adenosine threonylcarbamoyltransferase, found in Prochlorococcus marinus (strain NATL1A).